Consider the following 1528-residue polypeptide: Zinc finger FYVE domain-containing protein 16 (1528 aa).

Ser120 is subject to Phosphoserine. Residues 629-664 (TQAVGGARPKQLLSLPPGTRSSKELNKPDVVDVPES) form a disordered region. Residues 649 to 658 (SSKELNKPDV) are compositionally biased toward basic and acidic residues. Residues 735 to 793 (DSEAPNCMNCQVKFTFTKRRHHCRACGKVFCGVCCNRKCKLQYLEKEARVCVICYETIN) form an FYVE-type zinc finger. Residues Cys741, Cys744, Cys757, Cys760, Cys765, Cys768, Cys785, and Cys788 each contribute to the Zn(2+) site. Residues Ser803, Ser833, Ser884, and Ser927 each carry the phosphoserine modification. Residues 819–849 (TDQPLQETQTSSTPSPTTLPISALKQPNVEG) form a disordered region. Residues 821 to 838 (QPLQETQTSSTPSPTTLP) are compositionally biased toward low complexity. Residues 928–949 (PTCHTAPVERLPGNTGTEGLPM) are disordered.

Interacts (via C-terminus) with TOM1 (via C-terminus); interaction is required to target TOM1 to endosomes. Does not interact with TOM1L1 or TOM1L2.

It is found in the cytoplasm. It localises to the early endosome membrane. In terms of biological role, may be involved in regulating membrane trafficking in the endosomal pathway. Overexpression induces endosome aggregation. Required to target TOM1 to endosomes. The protein is Zinc finger FYVE domain-containing protein 16 (Zfyve16) of Mus musculus (Mouse).